The following is a 266-amino-acid chain: uncharacterized protein (266 aa).

7 helical membrane-spanning segments follow: residues 25–45 (LPSL…GYLL), 64–84 (IGAA…AELI), 111–131 (IVTI…GHLV), 158–178 (VLIS…LSFG), 186–206 (ILGI…HVVA), 209–229 (FVIP…IGNI), and 230–250 (IPAF…IYFI).

This sequence belongs to the FNT transporter (TC 1.A.16) family.

The protein resides in the cell membrane. This is an uncharacterized protein from Bacillus subtilis (strain 168).